The sequence spans 152 residues: Small ribosomal subunit protein uS11A (152 aa).

Residues 131–152 (EDVTPIPSDSTRRKGGRRGRRL) form a disordered region. The segment covering 143–152 (RKGGRRGRRL) has biased composition (basic residues).

The protein belongs to the universal ribosomal protein uS11 family.

This is Small ribosomal subunit protein uS11A from Anopheles gambiae (African malaria mosquito).